The primary structure comprises 311 residues: Acyl-CoA dehydrogenase IpdE2 (311 aa).

R206 and G273 together coordinate FAD.

Belongs to the acyl-CoA dehydrogenase family. In terms of assembly, heterotetramer composed of 2 IpdE1 subunits and 2 IpdE2 subunits. The cofactor is FAD.

It carries out the reaction 3-[(3aS,4S,5R,7aS)-5-hydroxy-7a-methyl-1-oxo-octahydro-1H-inden-4-yl]propanoyl-CoA + A = (2E)-3-[(3aS,4S,5R,7aS)-5-hydroxy-7a-methyl-1-oxo-octahydro-1H-inden-4-yl]prop-2-enoyl-CoA + AH2. It participates in steroid metabolism; cholesterol degradation. Functionally, involved in cholesterol degradation. Catalyzes the dehydrogenation of 5OH-HIP-CoA to 5OH-HIPE-CoA. The protein is Acyl-CoA dehydrogenase IpdE2 of Mycolicibacterium smegmatis (strain ATCC 700084 / mc(2)155) (Mycobacterium smegmatis).